A 233-amino-acid chain; its full sequence is tRNA (guanine-N(7)-)-methyltransferase (233 aa).

A disordered region spans residues 1 to 36 (MSEFDPNPPRRNFYGRRHGKTLRQSQKGYLSEDLGS). 4 residues coordinate S-adenosyl-L-methionine: Glu-68, Glu-93, Asp-120, and Asp-142. Asp-142 is a catalytic residue. Substrate is bound by residues Lys-146, Asp-178, and 211–214 (TRYE).

It belongs to the class I-like SAM-binding methyltransferase superfamily. TrmB family.

It carries out the reaction guanosine(46) in tRNA + S-adenosyl-L-methionine = N(7)-methylguanosine(46) in tRNA + S-adenosyl-L-homocysteine. It participates in tRNA modification; N(7)-methylguanine-tRNA biosynthesis. In terms of biological role, catalyzes the formation of N(7)-methylguanine at position 46 (m7G46) in tRNA. The chain is tRNA (guanine-N(7)-)-methyltransferase from Paracoccus denitrificans (strain Pd 1222).